The following is a 175-amino-acid chain: Large ribosomal subunit protein uL10 (175 aa).

The protein belongs to the universal ribosomal protein uL10 family. Part of the ribosomal stalk of the 50S ribosomal subunit. The N-terminus interacts with L11 and the large rRNA to form the base of the stalk. The C-terminus forms an elongated spine to which L12 dimers bind in a sequential fashion forming a multimeric L10(L12)X complex.

Forms part of the ribosomal stalk, playing a central role in the interaction of the ribosome with GTP-bound translation factors. The protein is Large ribosomal subunit protein uL10 of Cyanothece sp. (strain PCC 7425 / ATCC 29141).